The sequence spans 1906 residues: A disintegrin and metalloproteinase with thrombospondin motifs 20 (1906 aa).

The first 26 residues, 1–26 (MRVAKWLTGLLCPISLLLTGSWEVRF), serve as a signal peptide directing secretion. The propeptide occupies 27–249 (HPRQEALVKT…RSQLHSRNKR (223 aa)). Asn92 and Asn221 each carry an N-linked (GlcNAc...) asparagine glycan. The disordered stretch occupies residues 201-222 (PCEVSENQMEKTALPSQSSRNT). The Peptidase M12B domain occupies 255–464 (RYVEVMVTAD…GHGECLLDKP (210 aa)). 11 disulfide bridges follow: Cys330/Cys383, Cys359/Cys365, Cys377/Cys459, Cys415/Cys443, Cys486/Cys508, Cys497/Cys518, Cys503/Cys537, Cys531/Cys542, Cys565/Cys602, Cys569/Cys607, and Cys580/Cys592. A Zn(2+)-binding site is contributed by His399. Glu400 is a catalytic residue. 2 residues coordinate Zn(2+): His403 and His409. Positions 465–552 (NGRTYDLSPQ…VTRDMETRPV (88 aa)) constitute a Disintegrin domain. A TSP type-1 1 domain is found at 553–608 (DGEWGPWGPYSSCSRTCGGGIKSTARLCDRPEPRNGGRYCVGRRMKFRSCNTDSCP). N-linked (GlcNAc...) asparagine glycosylation is found at Asn714, Asn798, and Asn805. Residues 721–842 (AGVFNSAHYG…FNIPIEERSN (122 aa)) form a spacer region. TSP type-1 domains lie at 843 to 901 (LFSW…MDCE), 906 to 962 (IIGK…GSCV), 962 to 1015 (VLTR…NCNE), 1017 to 1074 (PCPS…RACA), 1075 to 1131 (SWHV…APCL), 1148 to 1202 (RAAQ…LCFS), and 1203 to 1260 (PCGE…AACP). Asn1057 carries an N-linked (GlcNAc...) asparagine glycan. A disordered region spans residues 1265 to 1295 (RAPSSSEQPSHVPSRNVPLTHKPGENQDQGA). The span at 1266 to 1277 (APSSSEQPSHVP) shows a compositional bias: polar residues. TSP type-1 domains are found at residues 1300-1351 (RGNQ…RHCG), 1354-1411 (PCPH…HACP), 1412-1465 (EDVS…KACR), 1468-1526 (RCPS…QDCM), 1527-1584 (RYQW…PHCK), 1585-1648 (YSVV…LRSC), and 1650-1706 (HVAT…NDCK). N-linked (GlcNAc...) asparagine glycosylation occurs at Asn1562. The GON domain maps to 1707 to 1906 (LLTTCKELQV…MATGLSIQVL (200 aa)). N-linked (GlcNAc...) asparagine glycosylation is found at Asn1719, Asn1759, and Asn1777.

Zn(2+) is required as a cofactor. In terms of processing, the precursor is cleaved by a furin endopeptidase. Post-translationally, glycosylated. Can be O-fucosylated by POFUT2 on a serine or a threonine residue found within the consensus sequence C1-X(2)-(S/T)-C2-G of the TSP type-1 repeat domains where C1 and C2 are the first and second cysteine residue of the repeat, respectively. Fucosylated repeats can then be further glycosylated by the addition of a beta-1,3-glucose residue by the glucosyltransferase, B3GALTL. Fucosylation mediates the efficient secretion of ADAMTS family members. Can also be C-glycosylated with one or two mannose molecules on tryptophan residues within the consensus sequence W-X-X-W of the TPRs, and N-glycosylated. These other glycosylations can also facilitate secretion. In terms of tissue distribution, expressed at low level in testis and brain.

The protein localises to the secreted. It is found in the extracellular space. It localises to the extracellular matrix. Functionally, may play a role in tissue-remodeling process occurring in both normal and pathological conditions. May have a protease-independent function in the transport from the endoplasmic reticulum to the Golgi apparatus of secretory cargos, mediated by the GON domain. This Mus musculus (Mouse) protein is A disintegrin and metalloproteinase with thrombospondin motifs 20 (Adamts20).